Reading from the N-terminus, the 305-residue chain is MENNKCREDFRFTQEYEEDYPNTNERYYENYQVADRYYNYPNKYKEPKIKQCCCKKSMREALELLRYDALRPFVNFNQFAFISDFFIVGANLVGIDLSAPPKDNLSGLDGTFERFSACNCDLIDIAGRVSYPIPVPLTLEGLINTIGTIPGVAELIALIDAVIPPTIDLGAILDAILAAIIDFILAASTPLANVDLASLCNLKAVAFDITPADYEDFIASLGYYLDKKHYKECNCNCDCDDCCCNKGILDNLYMSNINNQVTVVAGSLVLTGVEVLGKKNDVIVLGNSNDSRIYFVCVDSIDYIA.

It localises to the spore coat. Its subcellular location is the spore. The protein resides in the perispore. Contributes to maintain proper thickness of the spore coat. May contribute to the formation of polar appendages. May play an important role in assembly of the outer layers of the spore coat. The polypeptide is Spore coat protein CotA (Clostridioides difficile (strain 630) (Peptoclostridium difficile)).